Here is a 259-residue protein sequence, read N- to C-terminus: Undecaprenyl-diphosphatase 4 (259 aa).

8 helical membrane passes run 1-21, 39-59, 71-91, 99-119, 133-153, 173-193, 208-228, and 239-259; these read MNWL…FLPI, AGLF…FIYY, FSKL…IGLL, ISKT…FLYM, ITYK…FPAI, AAYF…ILQF, SLIV…SWMI, and FAYY…THVF.

It belongs to the UppP family.

The protein localises to the cell membrane. The enzyme catalyses di-trans,octa-cis-undecaprenyl diphosphate + H2O = di-trans,octa-cis-undecaprenyl phosphate + phosphate + H(+). Functionally, catalyzes the dephosphorylation of undecaprenyl diphosphate (UPP). Confers resistance to bacitracin. The sequence is that of Undecaprenyl-diphosphatase 4 from Bacillus thuringiensis (strain Al Hakam).